The sequence spans 376 residues: Branched-chain-amino-acid aminotransferase, cytosolic (376 aa).

Lys-202 is modified (N6-(pyridoxal phosphate)lysine).

This sequence belongs to the class-IV pyridoxal-phosphate-dependent aminotransferase family. Pyridoxal 5'-phosphate serves as cofactor.

It is found in the cytoplasm. It catalyses the reaction L-leucine + 2-oxoglutarate = 4-methyl-2-oxopentanoate + L-glutamate. The enzyme catalyses L-isoleucine + 2-oxoglutarate = (S)-3-methyl-2-oxopentanoate + L-glutamate. The catalysed reaction is L-valine + 2-oxoglutarate = 3-methyl-2-oxobutanoate + L-glutamate. It carries out the reaction a 2-oxocarboxylate + L-methionine = 4-methylsulfanyl-2-oxobutanoate + an L-alpha-amino acid. Its pathway is amino-acid biosynthesis; L-isoleucine biosynthesis; L-isoleucine from 2-oxobutanoate: step 4/4. It functions in the pathway amino-acid biosynthesis; L-leucine biosynthesis; L-leucine from 3-methyl-2-oxobutanoate: step 4/4. It participates in amino-acid biosynthesis; L-valine biosynthesis; L-valine from pyruvate: step 4/4. The protein operates within amino-acid biosynthesis; L-methionine biosynthesis via salvage pathway; L-methionine from S-methyl-5-thio-alpha-D-ribose 1-phosphate: step 6/6. Functionally, cytoplasmic isozyme of branched-chain-amino-acid aminotransferase, which catalyzes the first reaction in the catabolism of the essential branched chain amino acids (BCAAs) leucine, isoleucine, and valine. Catalyzes the formation of methionine from 2-keto-4-methylthiobutyrate (KMTB) in the methionine salvage pathway primarily using BCAAs (leucine, isoleucine, and valine) as well as lysine and proline as the amino donors. Involved in cell cycle regulation. The protein is Branched-chain-amino-acid aminotransferase, cytosolic of Saccharomyces cerevisiae (strain ATCC 204508 / S288c) (Baker's yeast).